A 234-amino-acid chain; its full sequence is MYKRVLLKLSGEVLSGEDQKGFNEEHVEYLIKEIKGISEYGTKLGIVIGAGNIFRGRDFEGLRPTISDQIGMLGTVINALYLKDRFENAGIRTVIVSQIVTLPSVKLINYDDIDLYFDAGYVVIFAGGTSNPFFTTDTGAALRAVEMKAELLIKGTKVCGIYDKDPKKYSDAKKYNVITYDEAIEKNLKIMDTEAFSICKRYNMKILVMNFFENGNLLKAIKGENVGTLVVPKV.

ATP-binding positions include 8–11 (KLSG), Gly51, and Arg55. UMP-binding positions include Asp68 and 129-136 (TSNPFFTT). ATP is bound by residues Thr156, Tyr162, and Asp165.

Belongs to the UMP kinase family. In terms of assembly, homohexamer.

The protein localises to the cytoplasm. The catalysed reaction is UMP + ATP = UDP + ADP. Its pathway is pyrimidine metabolism; CTP biosynthesis via de novo pathway; UDP from UMP (UMPK route): step 1/1. Inhibited by UTP. Its function is as follows. Catalyzes the reversible phosphorylation of UMP to UDP. The polypeptide is Uridylate kinase (Fervidobacterium nodosum (strain ATCC 35602 / DSM 5306 / Rt17-B1)).